The chain runs to 970 residues: Protein CLASP-3 (970 aa).

2 disordered regions span residues 314 to 377 (SRLA…QKAR) and 651 to 675 (NGIS…ETPH). A compositionally biased stretch (polar residues) spans 344–355 (GSRTRTSSITSN). The stretch at 905–943 (ITPCVIKAYQSTSSSVRKTVVYCLVAMVNRVGEQRMAPH) is one HEAT repeat.

The protein belongs to the CLASP family.

The protein localises to the cytoplasm. The protein resides in the cytoskeleton. In terms of biological role, microtubule plus-end tracking protein that promotes the stabilization of dynamic microtubules. The chain is Protein CLASP-3 (cls-3) from Caenorhabditis briggsae.